The following is a 906-amino-acid chain: Inactive angiotensin-converting enzyme-related protein (906 aa).

The N-terminal stretch at 1–19 is a signal peptide; the sequence is MKFHILLLLLVGACLPVFT. A disordered region spans residues 28–95; it reads LLPADEAPKD…SPTPEPEPAI (68 aa). Residues 67–83 are compositionally biased toward basic and acidic residues; it reads PEPKPEPEPEPEPKPEP. N-linked (GlcNAc...) asparagine glycosylation is present at Asn-159. The Peptidase M2 domain maps to 175–765; that stretch reads IKDEEKLRSW…EIDQVVVGWD (591 aa). Cys-289 and Cys-297 form a disulfide bridge. N-linked (GlcNAc...) asparagine glycosylation occurs at Asn-653. The tract at residues 862-882 is disordered; sequence VTTPEPSAEPEPTAKTTTKMP. Over residues 863–882 the composition is skewed to low complexity; that stretch reads TTPEPSAEPEPTAKTTTKMP.

This sequence belongs to the peptidase M2 family. Expressed in the hypodermis, in the vulva during organogenesis, and in the ray papillae of the male tail.

Functionally, inactive as a metallopeptidase, due to a lack of active site residues. Required for larval molting, male tail development, and formation of adult alae. Acts in the heterochronic pathway and plays a role in the developmental timing of postembryonic hypodermal seam cell division and adult alae production. Acts synergistically with apl-1 in let-7 regulated postembryonic cell division events. Might act downstream of the heterochronic protein lin-41. Negative regulator of lifespan, heat and oxidative stress response and age-related degenerative changes like reduced pharyngeal pumping and decreased body movements. Lifespan restriction is dependent on the forkhead-type transcription factor daf-16. The chain is Inactive angiotensin-converting enzyme-related protein from Caenorhabditis elegans.